A 156-amino-acid chain; its full sequence is Small ribosomal subunit protein uS7 (156 aa).

Belongs to the universal ribosomal protein uS7 family. Part of the 30S ribosomal subunit. Contacts proteins S9 and S11.

Functionally, one of the primary rRNA binding proteins, it binds directly to 16S rRNA where it nucleates assembly of the head domain of the 30S subunit. Is located at the subunit interface close to the decoding center, probably blocks exit of the E-site tRNA. This chain is Small ribosomal subunit protein uS7, found in Mycolicibacterium vanbaalenii (strain DSM 7251 / JCM 13017 / BCRC 16820 / KCTC 9966 / NRRL B-24157 / PYR-1) (Mycobacterium vanbaalenii).